Consider the following 412-residue polypeptide: 1-deoxy-D-xylulose 5-phosphate reductoisomerase (412 aa).

Residues Thr10, Gly11, Ser12, Ile13, Gly36, Lys37, Asn38, and Asn130 each contribute to the NADPH site. Residue Lys131 participates in 1-deoxy-D-xylulose 5-phosphate binding. Glu132 contacts NADPH. A Mn(2+)-binding site is contributed by Asp156. Ser157, Glu158, Ser194, and His217 together coordinate 1-deoxy-D-xylulose 5-phosphate. Position 158 (Glu158) interacts with Mn(2+). Gly223 serves as a coordination point for NADPH. Residues Ser230, Asn235, Lys236, and Glu239 each contribute to the 1-deoxy-D-xylulose 5-phosphate site. Position 239 (Glu239) interacts with Mn(2+).

It belongs to the DXR family. Mg(2+) serves as cofactor. Mn(2+) is required as a cofactor.

It catalyses the reaction 2-C-methyl-D-erythritol 4-phosphate + NADP(+) = 1-deoxy-D-xylulose 5-phosphate + NADPH + H(+). It functions in the pathway isoprenoid biosynthesis; isopentenyl diphosphate biosynthesis via DXP pathway; isopentenyl diphosphate from 1-deoxy-D-xylulose 5-phosphate: step 1/6. In terms of biological role, catalyzes the NADPH-dependent rearrangement and reduction of 1-deoxy-D-xylulose-5-phosphate (DXP) to 2-C-methyl-D-erythritol 4-phosphate (MEP). The sequence is that of 1-deoxy-D-xylulose 5-phosphate reductoisomerase from Prochlorococcus marinus (strain NATL2A).